Reading from the N-terminus, the 102-residue chain is NADH-quinone oxidoreductase subunit K (102 aa).

3 helical membrane-spanning segments follow: residues 6 to 26 (FEHA…ALLI), 30 to 50 (LIVM…AFIA), and 62 to 82 (VMFL…LGLG).

The protein belongs to the complex I subunit 4L family. NDH-1 is composed of 14 different subunits. Subunits NuoA, H, J, K, L, M, N constitute the membrane sector of the complex.

The protein resides in the cell inner membrane. The enzyme catalyses a quinone + NADH + 5 H(+)(in) = a quinol + NAD(+) + 4 H(+)(out). In terms of biological role, NDH-1 shuttles electrons from NADH, via FMN and iron-sulfur (Fe-S) centers, to quinones in the respiratory chain. The immediate electron acceptor for the enzyme in this species is believed to be ubiquinone. Couples the redox reaction to proton translocation (for every two electrons transferred, four hydrogen ions are translocated across the cytoplasmic membrane), and thus conserves the redox energy in a proton gradient. In Methylococcus capsulatus (strain ATCC 33009 / NCIMB 11132 / Bath), this protein is NADH-quinone oxidoreductase subunit K.